Consider the following 618-residue polypeptide: Vacuolar-sorting receptor 5 (618 aa).

Residues 1–23 (MSPSNKGTVLALILALTMVVVNG) form the signal peptide. The Lumenal segment spans residues 24–563 (FSSRFFVEKS…IERRSGSRSR (540 aa)). The PA domain occupies 58–164 (KYGGFMIGSV…SFGDSLKKAL (107 aa)). Asparagine 81, asparagine 293, and asparagine 430 each carry an N-linked (GlcNAc...) asparagine glycan. EGF-like domains follow at residues 412–462 (ETNE…TSCK) and 465–511 (GPAR…LKCE). Intrachain disulfides connect cysteine 416/cysteine 434, cysteine 423/cysteine 443, cysteine 445/cysteine 461, cysteine 469/cysteine 489, cysteine 476/cysteine 497, cysteine 499/cysteine 510, and cysteine 540/cysteine 553. In terms of domain architecture, EGF-like 3; calcium-binding spans 512 to 554 (DIDECKEKSACKCDGCKCKNNWGGYECKCSNNSIYMKEEDTCI). An N-linked (GlcNAc...) asparagine glycan is attached at asparagine 542. The chain crosses the membrane as a helical span at residues 564–584 (GLFTIVVLTAIAGISLGAYIF). Topologically, residues 585–618 (YKYHLQSYMDSEIVSIMSQYIPLDSQSINQDSFK) are cytoplasmic. The short motif at 604-607 (YIPL) is the Tyrosine-based internalization motif element.

Belongs to the VSR (BP-80) family. Expressed in seedlings, roots, leaves, flowers and siliques.

It localises to the membrane. The protein resides in the golgi apparatus membrane. It is found in the cytoplasmic vesicle. Its subcellular location is the clathrin-coated vesicle membrane. The protein localises to the prevacuolar compartment membrane. In terms of biological role, vacuolar-sorting receptor (VSR) involved in clathrin-coated vesicles sorting from Golgi apparatus to vacuoles. The chain is Vacuolar-sorting receptor 5 (VSR5) from Arabidopsis thaliana (Mouse-ear cress).